The chain runs to 352 residues: Dof zinc finger protein DOF1.8 (352 aa).

The segment at 24–46 (LKQQSNPPSPATPVERKARPEKD) is disordered. The span at 37–46 (VERKARPEKD) shows a compositional bias: basic and acidic residues. The Dof-type zinc finger occupies 49–103 (LNCPRCNSLNTKFCYYNNYSLTQPRYFCKDCRRYWTAGGSLRNIPVGGGVRKNKR). Cys51, Cys54, Cys76, and Cys79 together coordinate Zn(2+). Disordered stretches follow at residues 93–136 (PVGG…PLPH) and 265–334 (GGDP…VGFW). The span at 104-129 (SSSNSSSSSPSSSSSSKKPLFANNNT) shows a compositional bias: low complexity. Over residues 310 to 323 (ENNDEHSDHEHEKE) the composition is skewed to basic and acidic residues.

The protein resides in the nucleus. In terms of biological role, transcription factor that binds specifically to a 5'-AA[AG]G-3' consensus core sequence. This Arabidopsis thaliana (Mouse-ear cress) protein is Dof zinc finger protein DOF1.8 (DOF1.8).